Reading from the N-terminus, the 87-residue chain is Tektin-2 (87 aa).

The stretch at 26–55 (VEEELLKEVEVIEATKKALQQRVSQAFQQL) forms a coiled coil.

The protein belongs to the tektin family. In terms of assembly, microtubule inner protein component of sperm flagellar doublet microtubules. May interact with CCDC172. Tyrosine phosphorylated. In terms of processing, ubiquitinated, leading to its degradation. Deubiquitinated by USP16, promoting its stability. Detected in sperm flagella (at protein level).

It is found in the cytoplasm. The protein resides in the cytoskeleton. The protein localises to the cilium axoneme. It localises to the flagellum axoneme. Its subcellular location is the microtubule organizing center. Functionally, microtubule inner protein (MIP) part of the dynein-decorated doublet microtubules (DMTs) in cilia and flagellar axoneme. Plays a key role in the assembly or attachment of the inner dynein arm to microtubules in sperm flagella and tracheal cilia. Forms filamentous polymers in the walls of ciliary and flagellar microtubules. This is Tektin-2 from Mesocricetus auratus (Golden hamster).